The chain runs to 462 residues: HEPACAM family member 2 (462 aa).

Positions 1–31 (MGQDAFMEPFGDTLGVFQCKIYLLLFGACSG) are cleaved as a signal peptide. N-linked (GlcNAc...) asparagine glycans are attached at residues Asn85, Asn129, and Asn165. 2 consecutive Ig-like C2-type domains span residues 149-233 (PVVQ…SDII) and 235-331 (PIIY…THFT). Cystine bridges form between Cys170/Cys219 and Cys270/Cys315. Asn320 is a glycosylation site (N-linked (GlcNAc...) asparagine). The chain crosses the membrane as a helical span at residues 352–372 (LASITGISLFLIISMCLLFLW). The Cytoplasmic segment spans residues 373–462 (KKYQPYKVIK…IPAQQQDHPE (90 aa)).

Poly-ADP-ribosylated (PARsylated) by tankyrase TNKS during late G2 and prophase, leading to translocation to mitotic centrosomes. In terms of processing, N-glycosylated. Widely expressed.

The protein resides in the golgi apparatus membrane. The protein localises to the cytoplasm. Its subcellular location is the cytoskeleton. It localises to the spindle. It is found in the microtubule organizing center. The protein resides in the centrosome. The protein localises to the midbody. In terms of biological role, required during prometaphase for centrosome maturation. Following poly-ADP-ribosylation (PARsylation) by TNKS, translocates from the Golgi apparatus to mitotic centrosomes and plays a key role in the formation of robust microtubules for prompt movement of chromosomes: anchors AKAP9/CG-NAP, a scaffold protein of the gamma-tubulin ring complex and promotes centrosome maturation. The chain is HEPACAM family member 2 (HEPACAM2) from Homo sapiens (Human).